Consider the following 432-residue polypeptide: D-amino acid dehydrogenase (432 aa).

Position 3 to 17 (3 to 17 (VVILGSGVVGVTSAW)) interacts with FAD.

It belongs to the DadA oxidoreductase family. It depends on FAD as a cofactor.

The catalysed reaction is a D-alpha-amino acid + A + H2O = a 2-oxocarboxylate + AH2 + NH4(+). Its pathway is amino-acid degradation; D-alanine degradation; NH(3) and pyruvate from D-alanine: step 1/1. Its function is as follows. Oxidative deamination of D-amino acids. This Salmonella agona (strain SL483) protein is D-amino acid dehydrogenase.